The chain runs to 301 residues: 2-phosphoglycerate kinase (301 aa).

In terms of domain architecture, ATP-cone spans 2–89; that stretch reads IRVIEKGDKV…FWRRFRKMKV (88 aa).

The protein belongs to the 2-phosphoglycerate kinase family. A divalent metal cation is required as a cofactor.

The catalysed reaction is (2R)-2-phosphoglycerate + ATP = (2R)-2,3-bisphosphoglycerate + ADP + H(+). The protein operates within thermoadapter biosynthesis; cyclic 2,3-diphosphoglycerate biosynthesis; cyclic 2,3-diphosphoglycerate from 2-phospho-D-glycerate: step 1/2. In terms of biological role, catalyzes the phosphorylation of 2-phosphoglycerate to 2,3-diphosphoglycerate. Involved in the biosynthesis of cyclic 2,3-bisphosphoglycerate, a thermoprotectant. This chain is 2-phosphoglycerate kinase, found in Pyrococcus horikoshii (strain ATCC 700860 / DSM 12428 / JCM 9974 / NBRC 100139 / OT-3).